The chain runs to 871 residues: Scavenger receptor class F member 2 (871 aa).

Positions 1–20 (MEGAGPRGAGPARRRGAGGP) are disordered. The N-terminal stretch at 1-43 (MEGAGPRGAGPARRRGAGGPPSPLLPSLLLLLLLWMLPDTVAP) is a signal peptide. Residues 44 to 441 (QELNPRGRNV…ACHLETNQRK (398 aa)) are Extracellular-facing. EGF-like domains follow at residues 71 to 110 (QGDECGIAVCEGNSTCSENEVCVRPGECRCRHGYFGANCD), 122 to 153 (CKELCSCHPHGQCEDVTGQCTCHARRWGARCE), 148 to 182 (WGARCEHACQCQHGTCHPRSGACRCEPGWWGAQCA), 183 to 212 (SACYCSATSRCDPQTGACLCHAGWWGRSCN), 213 to 241 (NQCACNSSPCEQQSGRCQCRERTFGARCD), and 236 to 270 (FGARCDRYCQCFRGRCHPVDGTCACEPGYRGKYCR). Intrachain disulfides connect C75/C86, C80/C98, C100/C109, C126/C134, C128/C141, C143/C152, C156/C163, C158/C170, C172/C181, C185/C193, C187/C200, C202/C211, C215/C222, C217/C229, C231/C240, C244/C251, C246/C258, and C260/C269. N-linked (GlcNAc...) asparagine glycosylation occurs at N83. Residues N310 and N365 are each glycosylated (N-linked (GlcNAc...) asparagine). The region spanning 372-403 (CAFVCADCGSGHCDFQSGRCLCSPGVHGPHCN) is the EGF-like 7 domain. 3 disulfide bridges follow: C376/C384, C379/C391, and C393/C402. N403 carries N-linked (GlcNAc...) asparagine glycosylation. A helical transmembrane segment spans residues 442–462 (GVMGAGALLVLLVCLLLSLLG). Residues 463–871 (CCCACRGKDP…ELGRAGAPTL (409 aa)) lie on the Cytoplasmic side of the membrane. At S551 the chain carries Phosphoserine. Residues 570–579 (EAPAESRDPE) show a composition bias toward basic and acidic residues. Residues 570–871 (EAPAESRDPE…ELGRAGAPTL (302 aa)) are disordered. A Phosphoserine modification is found at S613. Y628 carries the post-translational modification Phosphotyrosine. The segment covering 632-643 (ARREARPARARG) has biased composition (basic and acidic residues). S651, S653, S710, S718, and S742 each carry phosphoserine. Residues 705-725 (TPSDKSAHTVEHGSPRTRDPT) show a composition bias toward basic and acidic residues. Positions 821–831 (PPATETPGPEK) are enriched in low complexity. The span at 844–856 (KKTPIQKPPRKKS) shows a compositional bias: basic residues. The segment covering 861 to 871 (GELGRAGAPTL) has biased composition (low complexity).

As to quaternary structure, homophilic and heterophilic interaction via its extracellular domain. Interacts with SCARF1. The heterophilic interaction with SCARF1, which is stronger than the homophilic interaction with itself, is suppressed by the presence of SCARF1 ligand such as Ac-LDL. In terms of tissue distribution, predominantly expressed in endothelial cells. Expressed in heart, placenta, lung, kidney, spleen, small intestine and ovary.

It is found in the membrane. Functionally, probable adhesion protein, which mediates homophilic and heterophilic interactions. In contrast to SCARF1, it poorly mediates the binding and degradation of acetylated low density lipoprotein (Ac-LDL). This chain is Scavenger receptor class F member 2 (SCARF2), found in Homo sapiens (Human).